We begin with the raw amino-acid sequence, 1112 residues long: DNA repair protein rad13 (1112 aa).

The tract at residues 1-95 is N-domain; that stretch reads MGVSGLWDIL…QTIQKRQARR (95 aa). Residues Asp-30 and Asp-77 each contribute to the Mg(2+) site. Residues 395 to 414 form the UIM domain; sequence TDDLILQLATQQSLEENKKS. Residues 742 to 870 form an I-domain region; it reads KRSEKRDADE…LALEILHEFP (129 aa). Positions 777, 779, 798, 800, and 849 each coordinate Mg(2+). Residues 1056-1112 are disordered; the sequence is KMMASKNSSDSDSDSEDNFLASLTPKTNSSSISIENLPRKTKLSTSLLKKPSKRRRK. The segment covering 1079 to 1089 has biased composition (polar residues); that stretch reads TPKTNSSSISI.

This sequence belongs to the XPG/RAD2 endonuclease family. XPG subfamily. The cofactor is Mg(2+).

It localises to the nucleus. In terms of biological role, single-stranded DNA endonuclease involved in excision repair of DNA damaged with UV light, bulky adducts, or cross-linking agents. Essential for the incision step of excision-repair. The protein is DNA repair protein rad13 (rad13) of Schizosaccharomyces pombe (strain 972 / ATCC 24843) (Fission yeast).